Consider the following 246-residue polypeptide: Probable transcriptional regulatory protein HS_0508 (246 aa).

Belongs to the TACO1 family.

It localises to the cytoplasm. The sequence is that of Probable transcriptional regulatory protein HS_0508 from Histophilus somni (strain 129Pt) (Haemophilus somnus).